The chain runs to 472 residues: Cell division protein FtsP (472 aa).

A signal peptide (tat-type signal) is located at residues 1–32 (MSLSRRRFIQASGLALCAGGLPLQARASGAQA).

It belongs to the FtsP family. In terms of processing, predicted to be exported by the Tat system. The position of the signal peptide cleavage has not been experimentally proven.

Its subcellular location is the periplasm. Functionally, cell division protein that is required for growth during stress conditions. May be involved in protecting or stabilizing the divisomal assembly under conditions of stress. The polypeptide is Cell division protein FtsP (Edwardsiella tarda (strain FL6-60)).